A 443-amino-acid chain; its full sequence is Putative F-box/FBD/LRR-repeat protein At5g22670 (443 aa).

Residues 10 to 56 (QDSISLLPDDLLCRILSNLPTKVAVRTSVLSKRWKRFSLSVPLLEFN) form the F-box domain. 5 LRR repeats span residues 139–165 (SLRL…HLID), 166–191 (NIYP…NVSR), 219–243 (YGDI…SLRD), 275–300 (NFLL…TMSG), and 325–353 (YAVF…VLEL). The FBD domain maps to 361 to 412 (LLILSSSIPKCLRSSLEHVEIHTPISGAEAEMKLVKYFLENSAVLKKFTLQL).

The sequence is that of Putative F-box/FBD/LRR-repeat protein At5g22670 from Arabidopsis thaliana (Mouse-ear cress).